The chain runs to 678 residues: DNA ligase (678 aa).

Residues 47 to 51, 96 to 97, and Glu-122 contribute to the NAD(+) site; these read DSDYD and SL. Lys-124 functions as the N6-AMP-lysine intermediate in the catalytic mechanism. 4 residues coordinate NAD(+): Arg-145, Glu-182, Lys-300, and Lys-324. Positions 418, 421, 436, and 442 each coordinate Zn(2+). Residues 602–678 form the BRCT domain; sequence AYNESFTGKT…ILEDNLKDLL (77 aa).

The protein belongs to the NAD-dependent DNA ligase family. LigA subfamily. Mg(2+) serves as cofactor. Mn(2+) is required as a cofactor.

It catalyses the reaction NAD(+) + (deoxyribonucleotide)n-3'-hydroxyl + 5'-phospho-(deoxyribonucleotide)m = (deoxyribonucleotide)n+m + AMP + beta-nicotinamide D-nucleotide.. In terms of biological role, DNA ligase that catalyzes the formation of phosphodiester linkages between 5'-phosphoryl and 3'-hydroxyl groups in double-stranded DNA using NAD as a coenzyme and as the energy source for the reaction. It is essential for DNA replication and repair of damaged DNA. The polypeptide is DNA ligase (Francisella tularensis subsp. holarctica (strain OSU18)).